Reading from the N-terminus, the 170-residue chain is Urease accessory protein UreE (170 aa).

Residues 134–170 (ESGAYGGGHHHHGDDGHHPLAPIPLRQKIHRPSDKAE) form a disordered region.

Belongs to the UreE family.

It is found in the cytoplasm. Functionally, involved in urease metallocenter assembly. Binds nickel. Probably functions as a nickel donor during metallocenter assembly. The protein is Urease accessory protein UreE of Janthinobacterium sp. (strain Marseille) (Minibacterium massiliensis).